The sequence spans 50 residues: Sperm protamine P1 (50 aa).

This sequence belongs to the protamine P1 family. Cross-linked by interchain disulfide bonds around the DNA-helix. As to expression, testis.

Its subcellular location is the nucleus. The protein resides in the chromosome. Protamines substitute for histones in the chromatin of sperm during the haploid phase of spermatogenesis. They compact sperm DNA into a highly condensed, stable and inactive complex. The chain is Sperm protamine P1 (PRM1) from Saguinus imperator (Emperor tamarin).